Here is a 959-residue protein sequence, read N- to C-terminus: Glycine dehydrogenase (decarboxylating) (959 aa).

Lys-708 is subject to N6-(pyridoxal phosphate)lysine.

It belongs to the GcvP family. In terms of assembly, the glycine cleavage system is composed of four proteins: P, T, L and H. Pyridoxal 5'-phosphate is required as a cofactor.

The catalysed reaction is N(6)-[(R)-lipoyl]-L-lysyl-[glycine-cleavage complex H protein] + glycine + H(+) = N(6)-[(R)-S(8)-aminomethyldihydrolipoyl]-L-lysyl-[glycine-cleavage complex H protein] + CO2. In terms of biological role, the glycine cleavage system catalyzes the degradation of glycine. The P protein binds the alpha-amino group of glycine through its pyridoxal phosphate cofactor; CO(2) is released and the remaining methylamine moiety is then transferred to the lipoamide cofactor of the H protein. This is Glycine dehydrogenase (decarboxylating) from Yersinia pseudotuberculosis serotype O:1b (strain IP 31758).